The sequence spans 861 residues: E3 ubiquitin-protein ligase HECTD3 (861 aa).

Ala2 carries the N-acetylalanine modification. A Phosphoserine modification is found at Ser12. Residues 219 to 397 (DEDLIHFLYD…TSLVRYPRLE (179 aa)) form the DOC domain. The 346-residue stretch at 512-857 (YEKPLDYRWP…NCVAIDTDMS (346 aa)) folds into the HECT domain. Cys823 (glycyl thioester intermediate) is an active-site residue.

In terms of assembly, interacts with TRIOBP. Interacts with STX8.

Its subcellular location is the cytoplasm. It is found in the perinuclear region. The enzyme catalyses S-ubiquitinyl-[E2 ubiquitin-conjugating enzyme]-L-cysteine + [acceptor protein]-L-lysine = [E2 ubiquitin-conjugating enzyme]-L-cysteine + N(6)-ubiquitinyl-[acceptor protein]-L-lysine.. It functions in the pathway protein modification; protein ubiquitination. E3 ubiquitin ligases accepts ubiquitin from an E2 ubiquitin-conjugating enzyme in the form of a thioester and then directly transfers the ubiquitin to targeted substrates. Mediates ubiquitination of TRIOBP and its subsequent proteasomal degradation, thus facilitating cell cycle progression by regulating the turn-over of TRIOBP. Mediates also ubiquitination of STX8. The polypeptide is E3 ubiquitin-protein ligase HECTD3 (HECTD3) (Homo sapiens (Human)).